Here is a 198-residue protein sequence, read N- to C-terminus: Putative pseudouridine methyltransferase (198 aa).

S-adenosyl-L-methionine-binding residues include Leu-132 and Cys-186.

Belongs to the methyltransferase superfamily. TrmY family.

The protein resides in the cytoplasm. The sequence is that of Putative pseudouridine methyltransferase from Vibrio vulnificus (strain CMCP6).